The chain runs to 71 residues: Small ribosomal subunit protein bS21 (71 aa).

Belongs to the bacterial ribosomal protein bS21 family.

The sequence is that of Small ribosomal subunit protein bS21 from Photobacterium profundum (strain SS9).